We begin with the raw amino-acid sequence, 152 residues long: Protein-export protein SecB (152 aa).

This sequence belongs to the SecB family. As to quaternary structure, homotetramer, a dimer of dimers. One homotetramer interacts with 1 SecA dimer.

The protein resides in the cytoplasm. Functionally, one of the proteins required for the normal export of preproteins out of the cell cytoplasm. It is a molecular chaperone that binds to a subset of precursor proteins, maintaining them in a translocation-competent state. It also specifically binds to its receptor SecA. This Rickettsia typhi (strain ATCC VR-144 / Wilmington) protein is Protein-export protein SecB.